Here is a 105-residue protein sequence, read N- to C-terminus: Phosphoribosyl-ATP pyrophosphatase (105 aa).

The protein belongs to the PRA-PH family.

It is found in the cytoplasm. It carries out the reaction 1-(5-phospho-beta-D-ribosyl)-ATP + H2O = 1-(5-phospho-beta-D-ribosyl)-5'-AMP + diphosphate + H(+). It participates in amino-acid biosynthesis; L-histidine biosynthesis; L-histidine from 5-phospho-alpha-D-ribose 1-diphosphate: step 2/9. The sequence is that of Phosphoribosyl-ATP pyrophosphatase from Ruegeria pomeroyi (strain ATCC 700808 / DSM 15171 / DSS-3) (Silicibacter pomeroyi).